A 464-amino-acid polypeptide reads, in one-letter code: Protein FAM90A23 (464 aa).

Disordered regions lie at residues 1-42 (MMAR…DPRL), 69-389 (VPAT…HDGA), and 415-437 (HSPE…SEAP). 2 stretches are compositionally biased toward basic and acidic residues: residues 74-89 (GKKE…KPRA) and 97-114 (NKDK…DPQR). Over residues 180–197 (LASLSPLRKASLSSSSSL) the composition is skewed to low complexity.

The protein belongs to the FAM90 family.

This Homo sapiens (Human) protein is Protein FAM90A23.